Reading from the N-terminus, the 261-residue chain is Protein STAY-GREEN, chloroplastic (261 aa).

A chloroplast-targeting transit peptide spans 1–54 (MDTLTSAPLLTTKFKPSFSPQQKPCFPHRRRFENGKKNQSIVPVARLFGPAIFE).

It belongs to the staygreen family.

The protein localises to the plastid. Its subcellular location is the chloroplast. Functionally, probably involved in the disassembling mechanism of the intact light-harvesting complex of photosystem II (LHCII) in the thylakoid membranes. Required for the chlorophyll breakdown pathway. Acts independent and upstream of pheophorbide a oxygenase (PAO). This Pisum sativum (Garden pea) protein is Protein STAY-GREEN, chloroplastic (SGR).